The chain runs to 434 residues: Enolase (434 aa).

Substrate-binding residues include histidine 158 and glutamate 167. Residue glutamate 210 is the Proton donor of the active site. Residues aspartate 245, glutamate 294, and aspartate 319 each contribute to the Mg(2+) site. Positions 294 and 319 each coordinate substrate. Lysine 344 acts as the Proton acceptor in catalysis. Substrate is bound by residues 371–374 (SHRS) and lysine 395.

Belongs to the enolase family. In terms of assembly, homodimer. Requires Mg(2+) as cofactor.

The protein resides in the cytoplasm. It carries out the reaction (2R)-2-phosphoglycerate = phosphoenolpyruvate + H2O. Its pathway is carbohydrate degradation; glycolysis; pyruvate from D-glyceraldehyde 3-phosphate: step 4/5. The chain is Enolase from Doryteuthis pealeii (Longfin inshore squid).